Consider the following 574-residue polypeptide: Acetolactate synthase isozyme 3 large subunit (574 aa).

Position 51 (E51) interacts with thiamine diphosphate. FAD-binding positions include R153, 261-282 (HGTYEANMTMHNADVIFAVGVR), and 304-323 (DIDPTSISKTVTADIPIVGD). A thiamine pyrophosphate binding region spans residues 397 to 477 (QHQMFAALYY…VLVVNLNNRY (81 aa)). Mg(2+) is bound by residues D448 and N475.

The protein belongs to the TPP enzyme family. As to quaternary structure, dimer of large and small chains. Requires Mg(2+) as cofactor. Thiamine diphosphate serves as cofactor.

The enzyme catalyses 2 pyruvate + H(+) = (2S)-2-acetolactate + CO2. It functions in the pathway amino-acid biosynthesis; L-isoleucine biosynthesis; L-isoleucine from 2-oxobutanoate: step 1/4. The protein operates within amino-acid biosynthesis; L-valine biosynthesis; L-valine from pyruvate: step 1/4. Its activity is regulated as follows. Sensitive to valine inhibition. The protein is Acetolactate synthase isozyme 3 large subunit (ilvI) of Escherichia coli (strain K12).